Reading from the N-terminus, the 612-residue chain is Phragmoplastin DRP1D (612 aa).

Met-1 is modified (N-acetylmethionine). Residues 32–301 form the Dynamin-type G domain; that stretch reads WEALPSVAVV…LESVIRSRIP (270 aa). Residues 42–49 form a G1 motif region; sequence GGQSSGKS. 45-50 is a GTP binding site; it reads SSGKSS. The interval 68-70 is G2 motif; sequence VTR. Residues 143–146 form a G3 motif region; sequence DLPG. A G4 motif region spans residues 212-215; that stretch reads TKLD. Residues 213–218 and 243–246 each bind GTP; these read KLDLMD and NRSQ. Residues 242 to 245 are G5 motif; that stretch reads VNRS. A GED domain is found at 520 to 612; it reads FRKIASNVAA…DEIDAAVWVR (93 aa).

This sequence belongs to the TRAFAC class dynamin-like GTPase superfamily. Dynamin/Fzo/YdjA family. As to quaternary structure, forms homodimer and may homooligomerize and heterooligomerize to form the phragmoplastin complex. Binds to PHIP1.

The protein resides in the cytoplasm. The protein localises to the cytoskeleton. It catalyses the reaction GTP + H2O = GDP + phosphate + H(+). Functionally, putative microtubule-associated force-producing protein. Has a GTPase activity. This chain is Phragmoplastin DRP1D, found in Arabidopsis thaliana (Mouse-ear cress).